A 1068-amino-acid polypeptide reads, in one-letter code: Phosphatidylinositol 4,5-bisphosphate 3-kinase catalytic subunit alpha isoform (1068 aa).

The PI3K-ABD domain occupies 16 to 105 (MPPRILVECL…QPFLKVIEPV (90 aa)). A PI3K-RBD domain is found at 187-289 (KGQIIVVIWV…GRMPNLMLMA (103 aa)). One can recognise a C2 PI3K-type domain in the interval 330–487 (INSALRIKIL…DWFSSVVKFP (158 aa)). The region spanning 517-694 (LARDNELREN…GLLLESYCRA (178 aa)) is the PIK helical domain. One can recognise a PI3K/PI4K catalytic domain in the interval 765 to 1051 (RLEECRIMSS…QMNDAHHGGW (287 aa)). The segment at 771–777 (IMSSAKR) is G-loop. A catalytic loop region spans residues 912-920 (GIGDRHNSN). An activation loop region spans residues 931–957 (HIDFGHFLDHKKKKFGYKRERVPFVLT).

The protein belongs to the PI3/PI4-kinase family. In terms of assembly, heterodimer of a catalytic subunit PIK3CA and a p85 regulatory subunit (PIK3R1, PIK3R2 or PIK3R3). Interacts with IRS1 in nuclear extracts. Interacts with RUFY3. Interacts with RASD2. Interacts with APPL1. Interacts with HRAS and KRAS. Interaction with HRAS/KRAS is required for PI3K pathway signaling and cell proliferation stimulated by EGF and FGF2. Interacts with FAM83B; activates the PI3K/AKT signaling cascade.

It catalyses the reaction a 1,2-diacyl-sn-glycero-3-phospho-(1D-myo-inositol-4,5-bisphosphate) + ATP = a 1,2-diacyl-sn-glycero-3-phospho-(1D-myo-inositol-3,4,5-trisphosphate) + ADP + H(+). The catalysed reaction is a 1,2-diacyl-sn-glycero-3-phospho-(1D-myo-inositol) + ATP = a 1,2-diacyl-sn-glycero-3-phospho-(1D-myo-inositol-3-phosphate) + ADP + H(+). It carries out the reaction L-seryl-[protein] + ATP = O-phospho-L-seryl-[protein] + ADP + H(+). The enzyme catalyses 1,2-dioctanoyl-sn-glycero-3-phospho-(1D-myo-inositol-4,5-bisphosphate) + ATP = 1,2-dioctanoyl-sn-glycero-3-phospho-(1D-myo-inositol-3,4,5-trisphosphate) + ADP + H(+). It catalyses the reaction 1-octadecanoyl-2-(5Z,8Z,11Z,14Z)-eicosatetraenoyl-sn-glycero-3-phospho-1D-myo-inositol 4,5-bisphosphate + ATP = 1-octadecanoyl-2-(5Z,8Z,11Z,14Z-eicosatetraenoyl)-sn-glycero-3-phospho-(1D-myo-inositol 3,4,5-triphosphate) + ADP + H(+). It participates in phospholipid metabolism; phosphatidylinositol phosphate biosynthesis. Functionally, phosphoinositide-3-kinase (PI3K) phosphorylates phosphatidylinositol (PI) and its phosphorylated derivatives at position 3 of the inositol ring to produce 3-phosphoinositides. Uses ATP and PtdIns(4,5)P2 (phosphatidylinositol 4,5-bisphosphate) to generate phosphatidylinositol 3,4,5-trisphosphate (PIP3). PIP3 plays a key role by recruiting PH domain-containing proteins to the membrane, including AKT1 and PDPK1, activating signaling cascades involved in cell growth, survival, proliferation, motility and morphology. Participates in cellular signaling in response to various growth factors. Involved in the activation of AKT1 upon stimulation by receptor tyrosine kinases ligands such as EGF, insulin, IGF1, VEGFA and PDGF. Involved in signaling via insulin-receptor substrate (IRS) proteins. Essential in endothelial cell migration during vascular development through VEGFA signaling, possibly by regulating RhoA activity. Required for lymphatic vasculature development, possibly by binding to RAS and by activation by EGF and FGF2, but not by PDGF. Regulates invadopodia formation through the PDPK1-AKT1 pathway. Participates in cardiomyogenesis in embryonic stem cells through a AKT1 pathway. Participates in vasculogenesis in embryonic stem cells through PDK1 and protein kinase C pathway. Also has serine-protein kinase activity: phosphorylates PIK3R1 (p85alpha regulatory subunit), EIF4EBP1 and HRAS. Plays a role in the positive regulation of phagocytosis and pinocytosis. The protein is Phosphatidylinositol 4,5-bisphosphate 3-kinase catalytic subunit alpha isoform (Pik3ca) of Mus musculus (Mouse).